Here is a 2230-residue protein sequence, read N- to C-terminus: Golgin subfamily A member 4 (2230 aa).

The segment at 1–64 is disordered; sequence MFKKLKQKIS…SGDTQSFAQK (64 aa). Ser-10 carries the phosphoserine modification. Residues 12–41 show a composition bias toward low complexity; the sequence is EQQQLQQALAPAQASSNSSTPTRMRSRTSS. A Phosphothreonine modification is found at Thr-39. 4 positions are modified to phosphoserine: Ser-41, Ser-71, Ser-78, and Ser-89. Positions 87 to 107 are enriched in basic and acidic residues; that stretch reads SSSKESLVRTSSRESLNRLDL. Residues 87–127 are disordered; that stretch reads SSSKESLVRTSSRESLNRLDLDSSTASFDPPSDMDSEAEDL. Residues 133-203 form an interaction with MACF1 region; that stretch reads SLNKEQLIQR…EELQMDQQAK (71 aa). Positions 133–2185 form a coiled coil; it reads SLNKEQLIQR…EYLRKVLFEY (2053 aa). A Phosphoserine modification is found at Ser-266. 2 N-linked (GlcNAc...) asparagine glycosylation sites follow: Asn-585 and Asn-1612. Residues 2168–2215 form the GRIP domain; that stretch reads LFGEPTEFEYLRKVLFEYMMGRETKTMAKVITTVLKFPDDQTQKILER. Thr-2223 is subject to Phosphothreonine.

As to quaternary structure, homodimer. Interacts with RAB6A. Interacts with GTP-bound ARL1 and ARL3. Interacts with MACF1. Directly interacts with TBC1D23. Interacts with FAM91A1; this interaction may be mediated by TBC1D23.

Its subcellular location is the cytoplasm. The protein resides in the golgi apparatus membrane. The protein localises to the golgi apparatus. It localises to the trans-Golgi network membrane. Involved in vesicular trafficking at the Golgi apparatus level. May play a role in delivery of transport vesicles containing GPI-linked proteins from the trans-Golgi network through its interaction with MACF1. Involved in endosome-to-Golgi trafficking. In Homo sapiens (Human), this protein is Golgin subfamily A member 4 (GOLGA4).